We begin with the raw amino-acid sequence, 220 residues long: Peptide methionine sulfoxide reductase MsrA (220 aa).

Residue Cys-54 is part of the active site.

The protein belongs to the MsrA Met sulfoxide reductase family.

It carries out the reaction L-methionyl-[protein] + [thioredoxin]-disulfide + H2O = L-methionyl-(S)-S-oxide-[protein] + [thioredoxin]-dithiol. The enzyme catalyses [thioredoxin]-disulfide + L-methionine + H2O = L-methionine (S)-S-oxide + [thioredoxin]-dithiol. Its function is as follows. Has an important function as a repair enzyme for proteins that have been inactivated by oxidation. Catalyzes the reversible oxidation-reduction of methionine sulfoxide in proteins to methionine. The sequence is that of Peptide methionine sulfoxide reductase MsrA from Salinispora arenicola (strain CNS-205).